The sequence spans 365 residues: Succinyl-diaminopimelate desuccinylase (365 aa).

Histidine 64 lines the Zn(2+) pocket. The active site involves aspartate 66. Aspartate 95 contacts Zn(2+). Residue glutamate 125 is the Proton acceptor of the active site. Zn(2+) is bound by residues glutamate 126, glutamate 154, and histidine 339.

It belongs to the peptidase M20A family. DapE subfamily. Homodimer. Zn(2+) serves as cofactor. The cofactor is Co(2+).

The enzyme catalyses N-succinyl-(2S,6S)-2,6-diaminopimelate + H2O = (2S,6S)-2,6-diaminopimelate + succinate. The protein operates within amino-acid biosynthesis; L-lysine biosynthesis via DAP pathway; LL-2,6-diaminopimelate from (S)-tetrahydrodipicolinate (succinylase route): step 3/3. Its function is as follows. Catalyzes the hydrolysis of N-succinyl-L,L-diaminopimelic acid (SDAP), forming succinate and LL-2,6-diaminopimelate (DAP), an intermediate involved in the bacterial biosynthesis of lysine and meso-diaminopimelic acid, an essential component of bacterial cell walls. This Nautilia profundicola (strain ATCC BAA-1463 / DSM 18972 / AmH) protein is Succinyl-diaminopimelate desuccinylase.